A 486-amino-acid polypeptide reads, in one-letter code: Protein nucleotidyltransferase YdiU (486 aa).

Residues glycine 90, glycine 92, arginine 93, lysine 113, aspartate 125, glycine 126, arginine 176, and arginine 183 each coordinate ATP. Catalysis depends on aspartate 252, which acts as the Proton acceptor. Mg(2+) contacts are provided by asparagine 253 and aspartate 262. Residue aspartate 262 participates in ATP binding.

Belongs to the SELO family. Requires Mg(2+) as cofactor. The cofactor is Mn(2+).

The catalysed reaction is L-seryl-[protein] + ATP = 3-O-(5'-adenylyl)-L-seryl-[protein] + diphosphate. It carries out the reaction L-threonyl-[protein] + ATP = 3-O-(5'-adenylyl)-L-threonyl-[protein] + diphosphate. It catalyses the reaction L-tyrosyl-[protein] + ATP = O-(5'-adenylyl)-L-tyrosyl-[protein] + diphosphate. The enzyme catalyses L-histidyl-[protein] + UTP = N(tele)-(5'-uridylyl)-L-histidyl-[protein] + diphosphate. The catalysed reaction is L-seryl-[protein] + UTP = O-(5'-uridylyl)-L-seryl-[protein] + diphosphate. It carries out the reaction L-tyrosyl-[protein] + UTP = O-(5'-uridylyl)-L-tyrosyl-[protein] + diphosphate. In terms of biological role, nucleotidyltransferase involved in the post-translational modification of proteins. It can catalyze the addition of adenosine monophosphate (AMP) or uridine monophosphate (UMP) to a protein, resulting in modifications known as AMPylation and UMPylation. The protein is Protein nucleotidyltransferase YdiU of Pseudomonas aeruginosa (strain UCBPP-PA14).